The sequence spans 325 residues: Phospholipid phosphatase-related protein type 1 (325 aa).

The N-linked (GlcNAc...) asparagine glycan is linked to N5. The next 3 membrane-spanning stretches (helical) occupy residues 13–33 (IIPCFIFVELVIMAGTVLLAY), 67–87 (FITPLVLYCVLAATPTAIIFI), and 127–147 (FTGVFAFGLFATDIFVNAGQV). N163 is a glycosylation site (N-linked (GlcNAc...) asparagine). The next 3 helical transmembrane spans lie at 201 to 218 (AALSIYSALYATMYITST), 230 to 247 (VLCLGTLCTAFLTGLNRV), and 257 to 277 (VIAGFILGTAVALFLGMCVVH). At S307 the chain carries Phosphoserine. Residue N316 is glycosylated (N-linked (GlcNAc...) asparagine).

This sequence belongs to the PA-phosphatase related phosphoesterase family.

The protein localises to the cell membrane. Its subcellular location is the cell projection. It is found in the neuron projection. Functionally, may play a role in neurite outgrowth and neurogenesis. This chain is Phospholipid phosphatase-related protein type 1, found in Homo sapiens (Human).